The following is a 121-amino-acid chain: Small ribosomal subunit protein bS6 (121 aa).

It belongs to the bacterial ribosomal protein bS6 family.

Its function is as follows. Binds together with bS18 to 16S ribosomal RNA. This is Small ribosomal subunit protein bS6 from Rickettsia felis (strain ATCC VR-1525 / URRWXCal2) (Rickettsia azadi).